The following is a 296-amino-acid chain: Aquaporin NIP1-1 (296 aa).

M1 is subject to N-acetylmethionine. Helical transmembrane passes span 57–77 (LIAE…SVVV) and 84–104 (VVTL…LIYS). The NPA 1 motif lies at 114–116 (NPA). Transmembrane regions (helical) follow at residues 136 to 156 (VISQ…LFGL), 180 to 200 (AFTM…GVAT), and 205 to 225 (IGEL…LIAA). The short motif at 233-235 (NPG) is the NPA 2 element. Residues 249-269 (GIWIYLVAPTLGAIAGAWVYN) traverse the membrane as a helical segment. Position 286 is a phosphoserine (S286).

The protein belongs to the MIP/aquaporin (TC 1.A.8) family. NIP (TC 1.A.8.12) subfamily. As to expression, expressed in roots.

The protein localises to the membrane. Its function is as follows. Water channel probably required to promote glycerol permeability and water transport across cell membranes. This Arabidopsis thaliana (Mouse-ear cress) protein is Aquaporin NIP1-1 (NIP1-1).